Reading from the N-terminus, the 314-residue chain is uncharacterized protein (314 aa).

Disordered stretches follow at residues 170–203 (RSSM…NPDE) and 258–314 (VGES…PKKR). Low complexity predominate over residues 171-186 (SSMNSQSQMSESSFPT). Pro residues predominate over residues 187–200 (PIDPPPRIPHPPLN). Residues 261–272 (SSRQGENTQNVH) show a composition bias toward polar residues. Positions 289-303 (RFKDDARKSNEDEHM) are enriched in basic and acidic residues.

This is an uncharacterized protein from Arabidopsis thaliana (Mouse-ear cress).